Reading from the N-terminus, the 351-residue chain is Methylxanthine N1-demethylase NdmA (351 aa).

One can recognise a Rieske domain in the interval 17–125 (WHPVCTVTEL…CEERYGLIWI (109 aa)). [2Fe-2S] cluster-binding residues include C62, H64, C81, and H84.

[2Fe-2S] cluster is required as a cofactor.

It catalyses the reaction caffeine + NADH + O2 + H(+) = theobromine + formaldehyde + NAD(+) + H2O. It carries out the reaction caffeine + NADPH + O2 + H(+) = theobromine + formaldehyde + NADP(+) + H2O. The catalysed reaction is theophylline + NADH + O2 + H(+) = 3-methylxanthine + formaldehyde + NAD(+) + H2O. The enzyme catalyses theophylline + NADPH + O2 + H(+) = 3-methylxanthine + formaldehyde + NADP(+) + H2O. It catalyses the reaction 1,7-dimethylxanthine + NADH + O2 + H(+) = 7-methylxanthine + formaldehyde + NAD(+) + H2O. It carries out the reaction 1,7-dimethylxanthine + NADPH + O2 + H(+) = 7-methylxanthine + formaldehyde + NADP(+) + H2O. Its pathway is alkaloid degradation. Functionally, involved in the caffeine degradation, which is the essential first step for assimilating the carbon and nitrogen in caffeine. Catalyzes the N1-demethylation of caffeine to produce theobromine and formaldehyde. Also catalyzes the N1-demethylation of theophylline, paraxanthine, and 1-methylxanthine to 3-methylxanthine, 7-methylxanthine, and xanthine, respectively. NADH is the preferred substrate. The polypeptide is Methylxanthine N1-demethylase NdmA (ndmA) (Pseudomonas putida (Arthrobacter siderocapsulatus)).